Here is a 410-residue protein sequence, read N- to C-terminus: Meiotic driver wtf18 (410 aa).

The interval 1–39 (MKNKGYPLRSSMDELSTKNDNEIDLEKGPLPEYNSEDGS) is disordered. The segment covering 11–29 (SMDELSTKNDNEIDLEKGP) has biased composition (basic and acidic residues). 10 consecutive transmembrane segments (helical) span residues 89–109 (LLISVLAVIVVFFTAWVCVNP), 119–139 (AFFVTIGITCPILLITIFCFF), 149–169 (CIKVTVIFLAQCVKVTAVFLA), 174–194 (VTAVFLAKCVKVTAVFLAKCI), 204–224 (CVKVTAVFLAKCVKVIAVGLY), 229–249 (DLVVTIWLAWVVICFILFGCV), 265–285 (CSISAALFFILLLVCIPIWTL), 289–309 (LFGLFQVLGVQSCVVIVTKGL), 319–339 (ATGYEIEASSLFVIGNFLFFY), and 353–373 (FIGNGIASFLGGLGNAFGGIG).

The protein belongs to the WTF family. Homomer. Forms protein aggregates. The two isoforms can interact with each other and with themselves. High sequence similarity is required for their interaction.

The protein localises to the spore membrane. It localises to the vacuole membrane. The protein resides in the ascus epiplasm. It is found in the cytoplasm. Its subcellular location is the endoplasmic reticulum membrane. Functionally, promotes unequal transmission of alleles from the parental zygote to progeny spores by acting as poison/antidote system where the poison and antidote proteins are produced from the same locus; the poison component is trans-acting and targets all spores within an ascus whereas the antidote component is spore-specific, leading to poisoning of all progeny that do not inherit the allele. Its function is as follows. Localizes isoform 2 to the vacuole thereby facilitating its degradation. In addition to suppressing isoform 2, also suppresses S.pombe strain 972 wtf13 isoform 2. In terms of biological role, forms toxic aggregates that disrupt spore maturation. This chain is Meiotic driver wtf18, found in Schizosaccharomyces pombe (Fission yeast).